Consider the following 470-residue polypeptide: 6-phospho-beta-galactosidase (470 aa).

Residues Gln-19, His-116, Asn-159, Glu-160, and Asn-297 each coordinate D-galactose 6-phosphate. Glu-160 functions as the Proton donor in the catalytic mechanism. The active-site Nucleophile is Glu-375. D-galactose 6-phosphate contacts are provided by Ser-430, Trp-431, Lys-437, and Tyr-439.

Belongs to the glycosyl hydrolase 1 family.

The enzyme catalyses a 6-phospho-beta-D-galactoside + H2O = D-galactose 6-phosphate + an alcohol. The protein operates within carbohydrate metabolism; lactose degradation; D-galactose 6-phosphate and beta-D-glucose from lactose 6-phosphate: step 1/1. The sequence is that of 6-phospho-beta-galactosidase from Staphylococcus aureus (strain COL).